We begin with the raw amino-acid sequence, 308 residues long: Olfactory receptor OR9H1 (308 aa).

At Met-1–Phe-26 the chain is on the extracellular side. The chain crosses the membrane as a helical span at residues Leu-27–Ile-47. The Cytoplasmic portion of the chain corresponds to Trp-48–Tyr-58. Residues Ala-59 to Ala-81 traverse the membrane as a helical segment. At Asn-82 to Cys-95 the chain is on the extracellular side. Cys-95 and Cys-177 are oxidised to a cystine. The helical transmembrane segment at Ala-96–Met-116 threads the bilayer. Residues Ala-117–Gln-137 lie on the Cytoplasmic side of the membrane. The chain crosses the membrane as a helical span at residues Val-138–Thr-158. Topologically, residues Thr-159 to Ser-203 are extracellular. A helical transmembrane segment spans residues Ile-204–Leu-224. Topologically, residues Arg-225–Gly-245 are cytoplasmic. A helical transmembrane segment spans residues Val-246–Met-266. At Glu-267 to Ser-269 the chain is on the extracellular side. A helical membrane pass occupies residues Lys-270–Leu-290. The Cytoplasmic portion of the chain corresponds to Arg-291–Leu-308.

It belongs to the G-protein coupled receptor 1 family.

Its subcellular location is the cell membrane. Its function is as follows. Odorant receptor. In Homo sapiens (Human), this protein is Olfactory receptor OR9H1.